A 405-amino-acid polypeptide reads, in one-letter code: F-box/kelch-repeat protein At2g43445 (405 aa).

Positions 7–53 (NTNSIYIVSELLEEIFLGLPLKSILKFKTVSKQWRSILESNLFVERR) constitute an F-box domain. 2 Kelch repeats span residues 146–197 (RDKV…CVNG) and 356–400 (THHD…VVGY).

The chain is F-box/kelch-repeat protein At2g43445 from Arabidopsis thaliana (Mouse-ear cress).